Consider the following 647-residue polypeptide: MQVTIEDQSLEAAAGEACGQVLSRAVSGKRLKNAVACLVDGQPRDLAFPLPEDAHELALVAADSPMGLSIIRHSAAHIMAEAVKTLFPSVQVTIGPAIENGFYYDFAYERPFTPDDLEAIEAEMQKSIAANQPFSCTYVPKADAKALFAAQGESYKLEIMDENIVGDTVSLYRHGTFTDLCRGPHVPTTGLVRAVKLLSVAGAYWRGDEKRPMLQRIYGTAFASAADLKTYLHHIEEAKKRDHRKLGAQLDLFSFSEEVGAGMCIWHPKGELIRTIIEDFERREHLRRGYDLVRGPLILRRELWERSGHYDNYRENMYFTEIDEQSYGIKPMNCLSHMLIYKSRVRSYRDLPQRYFELGVVHRHEKSGVLHGLLRVRQFTQDDAHILCRPDQLQEEITGVVRFVQDVVGLFGFDFEAELSTRPEKSIGSDEDWDRATKALVDAMESIGLPYEVNEGDGAFYGPKIDIKLKDALDRRWQCATIQCDFTLPERFDLVYTDADGERKRPVMLHRVILGAVERFLGVLIEHTAGALPTWLSPVQARILIVTDAQKEFAEQALARLKEAGIRVELDDRNEKLGFKVREAQVEKIPYMLVAGDKEKELGGLNVRLRSGENLGVKTLDEVALMITADCQEPFKRGGMRYNFCSQ.

The 60-residue stretch at 1–60 (MQVTIEDQSLEAAAGEACGQVLSRAVSGKRLKNAVACLVDGQPRDLAFPLPEDAHELALV) folds into the TGS domain. A catalytic region spans residues 242–533 (DHRKLGAQLD…LIEHTAGALP (292 aa)). Cys-334, His-385, and His-510 together coordinate Zn(2+).

It belongs to the class-II aminoacyl-tRNA synthetase family. As to quaternary structure, homodimer. Zn(2+) serves as cofactor.

The protein resides in the cytoplasm. It carries out the reaction tRNA(Thr) + L-threonine + ATP = L-threonyl-tRNA(Thr) + AMP + diphosphate + H(+). In terms of biological role, catalyzes the attachment of threonine to tRNA(Thr) in a two-step reaction: L-threonine is first activated by ATP to form Thr-AMP and then transferred to the acceptor end of tRNA(Thr). Also edits incorrectly charged L-seryl-tRNA(Thr). The sequence is that of Threonine--tRNA ligase from Solidesulfovibrio magneticus (strain ATCC 700980 / DSM 13731 / RS-1) (Desulfovibrio magneticus).